Consider the following 51-residue polypeptide: Large ribosomal subunit protein bL33 (51 aa).

Residues 1 to 23 form a disordered region; it reads MRDKIKLESSAGTGHFYTTTKNK. Polar residues predominate over residues 10 to 20; sequence SAGTGHFYTTT.

It belongs to the bacterial ribosomal protein bL33 family.

This chain is Large ribosomal subunit protein bL33, found in Chromobacterium violaceum (strain ATCC 12472 / DSM 30191 / JCM 1249 / CCUG 213 / NBRC 12614 / NCIMB 9131 / NCTC 9757 / MK).